Reading from the N-terminus, the 374-residue chain is MSRVPSPPPPAEMSSGPVAESWCYTQIKVVKFSYMWTINNFSFCREEMGEVIKSSTFSSGANDKLKWCLRVNPKGLDEESKDYLSLYLLLVSCPKSEVRAKFKFSILNAKGEETKAMESQRAYRFVQGKDWGFKKFIRRDFLLDEANGLLPDDKLTLFCEVSVVQDSVNISGQNTMNMVKVPECRLSDELGGLWENSRFTDCCLCVAGQEFQAHKAILAARSPVFSAMFEHEMEESKKNRVEIKDVEPDVFKEMMCFIYTGKASNLDKMADDLLAAADKYALERLKVMCEEALCSNLSVENAAEILILADLHSADQLKTQAVDFINYHASDVMETSGWKSMVVSHPHLVAEAYRSLASAQCPFLGPPRKRLKQS.

One can recognise an MATH domain in the interval 31–161 (KFSYMWTINN…DDKLTLFCEV (131 aa)). Residues 71–191 (VNPKGLDEES…PECRLSDELG (121 aa)) are required for nuclear localization. A BTB domain is found at 173–297 (QNTMNMVKVP…MCEEALCSNL (125 aa)). A homodimerization region spans residues 297–355 (LSVENAAEILILADLHSADQLKTQAVDFINYHASDVMETSGWKSMVVSHPHLVAEAYRS).

The protein belongs to the Tdpoz family. In terms of assembly, homodimer. Part of cullin-RING-based BCR (BTB-CUL3-RBX1) E3 ubiquitin-protein ligase complexes that contain CUL3 and SPOP, plus a target protein.

It localises to the nucleus. It is found in the nucleus speckle. Its pathway is protein modification; protein ubiquitination. Component of a cullin-RING-based BCR (BTB-CUL3-RBX1) E3 ubiquitin-protein ligase complex that mediates the ubiquitination of target proteins, leading most often to their proteasomal degradation. The protein is Speckle-type POZ protein B (spop-b) of Xenopus laevis (African clawed frog).